The following is a 476-amino-acid chain: Aspartyl/glutamyl-tRNA(Asn/Gln) amidotransferase subunit B (476 aa).

The protein belongs to the GatB/GatE family. GatB subfamily. In terms of assembly, heterotrimer of A, B and C subunits.

The catalysed reaction is L-glutamyl-tRNA(Gln) + L-glutamine + ATP + H2O = L-glutaminyl-tRNA(Gln) + L-glutamate + ADP + phosphate + H(+). The enzyme catalyses L-aspartyl-tRNA(Asn) + L-glutamine + ATP + H2O = L-asparaginyl-tRNA(Asn) + L-glutamate + ADP + phosphate + 2 H(+). Allows the formation of correctly charged Asn-tRNA(Asn) or Gln-tRNA(Gln) through the transamidation of misacylated Asp-tRNA(Asn) or Glu-tRNA(Gln) in organisms which lack either or both of asparaginyl-tRNA or glutaminyl-tRNA synthetases. The reaction takes place in the presence of glutamine and ATP through an activated phospho-Asp-tRNA(Asn) or phospho-Glu-tRNA(Gln). The polypeptide is Aspartyl/glutamyl-tRNA(Asn/Gln) amidotransferase subunit B (Clostridium kluyveri (strain ATCC 8527 / DSM 555 / NBRC 12016 / NCIMB 10680 / K1)).